A 458-amino-acid polypeptide reads, in one-letter code: Acyl-CoA-binding domain-containing protein 5 (458 aa).

Residues 8–97 (HQTRFEAAVS…MKKILETMPV (90 aa)) enclose the ACB domain. An acyl-CoA is bound by residues 19–28 (IQSLPKNGSF), 39–43 (YSFYK), Lys65, and Tyr84. Disordered regions lie at residues 119-248 (KHGR…REED) and 296-369 (TETS…GPNG). Residues 125-139 (GVTSELGSVLTSTPN) show a composition bias toward polar residues. Residues 154–188 (AESDEEQAATKEVREEDEEEESEHSEQEDKDVEQQ) adopt a coiled-coil conformation. Composition is skewed to basic and acidic residues over residues 177–195 (HSEQEDKDVEQQPGHEKPA), 303–313 (ELKDGGEDGKQ), and 322–338 (TWSEKSEHFGSRRERPS). A compositionally biased stretch (gly residues) spans 343–356 (GGDGSRSGQIGSGG). A coiled-coil region spans residues 373–402 (EQIAVVLMRLQEDMQNVLQRLHSLEVQTAS). The helical transmembrane segment at 430 to 450 (GTLALAVVWPFVVHWLMHVFL) threads the bilayer.

This sequence belongs to the ATG37 family.

It is found in the peroxisome membrane. Acyl-CoA binding protein which acts as the peroxisome receptor for pexophagy but is dispensable for aggrephagy and nonselective autophagy. Binds medium- and long-chain acyl-CoA esters. The protein is Acyl-CoA-binding domain-containing protein 5 (acbd5) of Xenopus tropicalis (Western clawed frog).